The sequence spans 602 residues: General amino-acid permease GAP1 (602 aa).

Over 1–95 the chain is Cytoplasmic; sequence MSNTSSYEKN…LKHHLKNRHL (95 aa). Residue lysine 76 forms a Glycyl lysine isopeptide (Lys-Gly) (interchain with G-Cter in ubiquitin) linkage. Residues 96-116 form a helical membrane-spanning segment; sequence QMIAIGGAIGTGLLVGSGTAL. The Extracellular segment spans residues 117–121; it reads RTGGP. Residues 122–142 form a helical membrane-spanning segment; sequence ASLLIGWGSTGTMIYAMVMAL. Over 143–165 the chain is Cytoplasmic; the sequence is GELAVIFPISGGFTTYATRFIDE. A helical membrane pass occupies residues 166–185; that stretch reads SFGYANNFNYMLQWLVVLPL. The Extracellular segment spans residues 186-204; the sequence is EIVSASITVNFWGTDPKYR. A helical membrane pass occupies residues 205–224; sequence DGFVALFWLAIVIINMFGVK. Over 225 to 237 the chain is Cytoplasmic; it reads GYGEAEFVFSFIK. A helical transmembrane segment spans residues 238–256; sequence VITVVGFIILGIILNCGGG. Residues 257–280 are Extracellular-facing; that stretch reads PTGGYIGGKYWHDPGAFAGDTPGA. A helical transmembrane segment spans residues 281-298; sequence KFKGVCSVFVTAAFSFAG. Over 299 to 321 the chain is Cytoplasmic; the sequence is SELVGLAASESVEPRKSVPKAAK. Residues 322–342 traverse the membrane as a helical segment; it reads QVFWRITLFYILSLLMIGLLV. Residues 343–376 lie on the Extracellular side of the membrane; the sequence is PYNDKSLIGASSVDAAASPFVIAIKTHGIKGLPS. The chain crosses the membrane as a helical span at residues 377–396; sequence VVNVVILIAVLSVGNSAIYA. The Cytoplasmic segment spans residues 397-421; the sequence is CSRTMVALAEQRFLPEIFSYVDRKG. The helical transmembrane segment at 422 to 442 threads the bilayer; that stretch reads RPLVGIAVTSAFGLIAFVAAS. The Extracellular portion of the chain corresponds to 443 to 451; the sequence is KKEGEVFNW. Residues 452 to 472 traverse the membrane as a helical segment; that stretch reads LLALSGLSSLFTWGGICICHI. The Cytoplasmic segment spans residues 473–491; that stretch reads RFRKALAAQGRGLDELSFK. A helical membrane pass occupies residues 492 to 510; it reads SPTGVWGSYWGLFMVIIMF. Topologically, residues 511–529 are extracellular; that stretch reads IAQFYVAVFPVGDSPSAEG. The helical transmembrane segment at 530 to 548 threads the bilayer; it reads FFEAYLSFPLVMVMYIGHK. The Cytoplasmic segment spans residues 549–602; sequence IYKRNWKLFIPAEKMDIDTGRREVDLDLLKQEIAEEKAIMATKPRWYRIWNFWC.

The protein belongs to the amino acid-polyamine-organocation (APC) superfamily. YAT (TC 2.A.3.10) family. In terms of processing, active permease is phosphorylated. The addition of glutamine causes rapid dephosphorylation and inactivation of the permease. Post-translationally, ubiquitination by RSP5 and the RSP5-associated proteins BUL1 and BUL2, leads the addition of poly-ubiquitin chains being specifically formed by linkage through the lysine 63 residue of ubiquitin and mediates ammonium-induced endocytosis and degradation in the vacuole.

Its subcellular location is the cell membrane. It is found in the endoplasmic reticulum membrane. Functionally, general amino-acid permease involved in the uptake of all the naturally occurring L-amino-acids, related compounds such as ornithine and citrulline, some D-amino acids, toxic amino acid analogs such as azetidine-2-carboxylate, and the polyamines putrescine and spermidine. Senses its transport substrates to set an appropriate level of transporter activity at the cell surface. Required for FLO11 expression and invasive growth. This is General amino-acid permease GAP1 from Saccharomyces cerevisiae (strain ATCC 204508 / S288c) (Baker's yeast).